A 372-amino-acid polypeptide reads, in one-letter code: Anhydro-N-acetylmuramic acid kinase (372 aa).

13–20 (GTSMDGID) contributes to the ATP binding site.

It belongs to the anhydro-N-acetylmuramic acid kinase family.

It catalyses the reaction 1,6-anhydro-N-acetyl-beta-muramate + ATP + H2O = N-acetyl-D-muramate 6-phosphate + ADP + H(+). It functions in the pathway amino-sugar metabolism; 1,6-anhydro-N-acetylmuramate degradation. Its pathway is cell wall biogenesis; peptidoglycan recycling. Functionally, catalyzes the specific phosphorylation of 1,6-anhydro-N-acetylmuramic acid (anhMurNAc) with the simultaneous cleavage of the 1,6-anhydro ring, generating MurNAc-6-P. Is required for the utilization of anhMurNAc either imported from the medium or derived from its own cell wall murein, and thus plays a role in cell wall recycling. This Rhizobium johnstonii (strain DSM 114642 / LMG 32736 / 3841) (Rhizobium leguminosarum bv. viciae) protein is Anhydro-N-acetylmuramic acid kinase.